We begin with the raw amino-acid sequence, 396 residues long: Phosphopentomutase (396 aa).

Residues D14, D286, H291, D327, H328, and H339 each coordinate Mn(2+).

It belongs to the phosphopentomutase family. Requires Mn(2+) as cofactor.

The protein localises to the cytoplasm. It carries out the reaction 2-deoxy-alpha-D-ribose 1-phosphate = 2-deoxy-D-ribose 5-phosphate. The enzyme catalyses alpha-D-ribose 1-phosphate = D-ribose 5-phosphate. Its pathway is carbohydrate degradation; 2-deoxy-D-ribose 1-phosphate degradation; D-glyceraldehyde 3-phosphate and acetaldehyde from 2-deoxy-alpha-D-ribose 1-phosphate: step 1/2. In terms of biological role, isomerase that catalyzes the conversion of deoxy-ribose 1-phosphate (dRib-1-P) and ribose 1-phosphate (Rib-1-P) to deoxy-ribose 5-phosphate (dRib-5-P) and ribose 5-phosphate (Rib-5-P), respectively. The sequence is that of Phosphopentomutase from Staphylococcus carnosus (strain TM300).